Reading from the N-terminus, the 144-residue chain is Bacilliredoxin BrxA (144 aa).

Catalysis depends on nucleophile residues cysteine 53 and cysteine 55. Cysteine 53 bears the S-bacillithiol cysteine disulfide mark. The CXC active site motif signature appears at 53 to 55 (CGC). Cysteine 53 and cysteine 55 are oxidised to a cystine.

This sequence belongs to the bacilliredoxin family. Post-translationally, N-terminal Cys of the CXC active site motif can react with bacillithiol (BSH) to form mixed disulfides. S-bacillithiolation protects Cys residues against overoxidation by acting as a redox switch in response to oxidative stress.

Its function is as follows. S-bacillithiolation is the formation of mixed disulfide bonds between protein thiols and the general thiol reductant bacillithiol (BSH) under oxidative stress. BSH is an equivalent of glutathione (GSH) in Firmicutes. This protein is a dithiol bacilliredoxin, which debacillithiolates (removes BSH) the S-bacillithiolated OhrR (OhrR-SSB) in vitro and in vivo NaOCl-generated S-bacillithiolated MetE (MetE-SSB). Involved in maintaining redox homeostasis in response to disulfide stress conditions. Has a redox potential of -130 mV. Displays weak protein disulfide isomerase activity in vitro. The chain is Bacilliredoxin BrxA from Bacillus subtilis (strain 168).